Here is a 585-residue protein sequence, read N- to C-terminus: Zinc finger protein Eos (585 aa).

Disordered stretches follow at residues 1 to 43 (MHTP…PDFL) and 68 to 98 (EKEF…SANS). Over residues 25-34 (QGKDNLERDP) the composition is skewed to basic and acidic residues. Residues 79-98 (SVSTPNSQHSSPSRSLSANS) show a composition bias toward polar residues. Lys-100 participates in a covalent cross-link: Glycyl lysine isopeptide (Lys-Gly) (interchain with G-Cter in SUMO2). Phosphoserine is present on Ser-105. C2H2-type zinc fingers lie at residues 159–181 (LKCD…KRSH), 187–209 (FHCN…IKLH), 215–237 (FKCP…LRTH), and 248–271 (YKCN…ERCH). Positions 281–585 (AQALAGQPGD…HIVRGEHKVG (305 aa)) are interaction with FOXP3. At Lys-335 the chain carries N6-acetyllysine. The interval 410 to 489 (PGRLELPGSR…QPPPTIVVGR (80 aa)) is disordered. A CTBP-binding motif PEDLA motif is present at residues 425-429 (PEDLA). The segment covering 475-484 (QGPPPQPPPT) has biased composition (pro residues). Lys-500 is covalently cross-linked (Glycyl lysine isopeptide (Lys-Gly) (interchain with G-Cter in SUMO2)). C2H2-type zinc fingers lie at residues 530-552 (FKCE…MGCH) and 558-582 (FECN…RGEH).

This sequence belongs to the Ikaros C2H2-type zinc-finger protein family. As to quaternary structure, self-associates. Interacts with other family members; IKZF1, IKZF2, IKZF3 and IKZF5. Interacts with CTBP2. Interacts with SPI1, MITF, FOXP3 and CTBP1. In terms of tissue distribution, highly expressed in skeletal muscle, low levels of expression in heart, thymus, kidney, liver, and spleen. Expressed in the hematopoietic cell lines MOLT-4, NALM-6 and K-562. Highly expressed in THP-1 and M-07e cell lines, which have characteristics of myeloid and early megakaryocytic cells respectively.

Its subcellular location is the nucleus. Functionally, DNA-binding protein that binds to the 5'GGGAATRCC-3' Ikaros-binding sequence. Transcriptional repressor. Interacts with SPI1 and MITF to repress transcription of the CTSK and ACP5 promoters via recruitment of corepressors SIN3A and CTBP2. May be involved in the development of central and peripheral nervous systems. Essential for the inhibitory function of regulatory T-cells (Treg). Mediates FOXP3-mediated gene silencing in regulatory T-cells (Treg) via recruitment of corepressor CTBP1. In Homo sapiens (Human), this protein is Zinc finger protein Eos (IKZF4).